The chain runs to 236 residues: tRNA (guanine-N(1)-)-methyltransferase (236 aa).

Residues Gly116 and Leu136–Leu141 each bind S-adenosyl-L-methionine.

This sequence belongs to the RNA methyltransferase TrmD family. As to quaternary structure, homodimer.

It localises to the cytoplasm. It carries out the reaction guanosine(37) in tRNA + S-adenosyl-L-methionine = N(1)-methylguanosine(37) in tRNA + S-adenosyl-L-homocysteine + H(+). Functionally, specifically methylates guanosine-37 in various tRNAs. The polypeptide is tRNA (guanine-N(1)-)-methyltransferase (Thiobacillus denitrificans (strain ATCC 25259 / T1)).